The primary structure comprises 136 residues: uncharacterized protein (136 aa).

The interval 74–97 is disordered; it reads RADPGRKGRTQPLPTQGSARRFLH.

This is an uncharacterized protein from Saccharomyces cerevisiae (strain ATCC 204508 / S288c) (Baker's yeast).